We begin with the raw amino-acid sequence, 282 residues long: Phosphatidylglycerol--prolipoprotein diacylglyceryl transferase (282 aa).

4 helical membrane-spanning segments follow: residues 19 to 39 (IGPITIRWYGLLIATAVLIGV), 59 to 79 (LSIWLVIGAIPAARIYYVLFQ), 90 to 110 (IIAIWQGGIAIHGAIIGGTLA), and 120 to 140 (VPFWQLADLVAPSLILGQAIG). Arg-141 contacts a 1,2-diacyl-sn-glycero-3-phospho-(1'-sn-glycerol). The next 3 membrane-spanning stretches (helical) occupy residues 181–201 (TFLYESIWDLMVFALLITLFF), 212–232 (VGTLFMVYLATYSLGRLWIEG), and 245–265 (IAQVVSLTGITLGLAGLAWLY).

It belongs to the Lgt family.

It is found in the cell inner membrane. It carries out the reaction L-cysteinyl-[prolipoprotein] + a 1,2-diacyl-sn-glycero-3-phospho-(1'-sn-glycerol) = an S-1,2-diacyl-sn-glyceryl-L-cysteinyl-[prolipoprotein] + sn-glycerol 1-phosphate + H(+). Its pathway is protein modification; lipoprotein biosynthesis (diacylglyceryl transfer). In terms of biological role, catalyzes the transfer of the diacylglyceryl group from phosphatidylglycerol to the sulfhydryl group of the N-terminal cysteine of a prolipoprotein, the first step in the formation of mature lipoproteins. This is Phosphatidylglycerol--prolipoprotein diacylglyceryl transferase from Trichormus variabilis (strain ATCC 29413 / PCC 7937) (Anabaena variabilis).